We begin with the raw amino-acid sequence, 428 residues long: Serine--tRNA ligase (428 aa).

235 to 237 (TAE) is an L-serine binding site. 266-268 (RSE) is a binding site for ATP. An L-serine-binding site is contributed by Glu-289. Residue 353-356 (EISS) coordinates ATP. L-serine is bound at residue Ser-389.

This sequence belongs to the class-II aminoacyl-tRNA synthetase family. Type-1 seryl-tRNA synthetase subfamily. As to quaternary structure, homodimer. The tRNA molecule binds across the dimer.

The protein localises to the cytoplasm. The enzyme catalyses tRNA(Ser) + L-serine + ATP = L-seryl-tRNA(Ser) + AMP + diphosphate + H(+). It carries out the reaction tRNA(Sec) + L-serine + ATP = L-seryl-tRNA(Sec) + AMP + diphosphate + H(+). It participates in aminoacyl-tRNA biosynthesis; selenocysteinyl-tRNA(Sec) biosynthesis; L-seryl-tRNA(Sec) from L-serine and tRNA(Sec): step 1/1. Catalyzes the attachment of serine to tRNA(Ser). Is also able to aminoacylate tRNA(Sec) with serine, to form the misacylated tRNA L-seryl-tRNA(Sec), which will be further converted into selenocysteinyl-tRNA(Sec). The protein is Serine--tRNA ligase of Shewanella frigidimarina (strain NCIMB 400).